Reading from the N-terminus, the 242-residue chain is Probable septum site-determining protein MinC (242 aa).

The protein belongs to the MinC family. As to quaternary structure, interacts with MinD and FtsZ.

In terms of biological role, cell division inhibitor that blocks the formation of polar Z ring septums. Rapidly oscillates between the poles of the cell to destabilize FtsZ filaments that have formed before they mature into polar Z rings. Prevents FtsZ polymerization. This is Probable septum site-determining protein MinC from Thioalkalivibrio sulfidiphilus (strain HL-EbGR7).